The sequence spans 549 residues: Lysine-specific demethylase JMJ31 (549 aa).

Residues 125–296 (DYRPGQIYLA…SNMPEHMDSY (172 aa)) enclose the JmjC domain. The Fe cation site is built by histidine 184, aspartate 186, and histidine 266.

The protein belongs to the JARID1 histone demethylase family. Requires Fe(2+) as cofactor. As to expression, mostly expressed in leaves and inflorescences, and, to a lower extent, in roots, siliques and stems.

It is found in the nucleus. Functionally, may function as histone H3 lysine demethylase and be involved in regulation of gene expression. The polypeptide is Lysine-specific demethylase JMJ31 (Arabidopsis thaliana (Mouse-ear cress)).